The chain runs to 102 residues: MAVICNTCGLPEDLCACGDLAKDSTKIIIRLETRRFKKKGTMIEGLDPKLNNLENVAKELKNKYACGGTAKEGYVFLQGDHRDTIKDTLVGLGFPESSIELH.

This sequence belongs to the SUI1 family.

The polypeptide is Protein translation factor SUI1 homolog (Cenarchaeum symbiosum (strain A)).